The chain runs to 191 residues: Ribonuclease HII (191 aa).

In terms of domain architecture, RNase H type-2 spans 16–191 (INLIGIDEAG…KLHRKSFKLL (176 aa)). A divalent metal cation is bound by residues Asp22, Glu23, and Asp110.

This sequence belongs to the RNase HII family. It depends on Mn(2+) as a cofactor. Mg(2+) is required as a cofactor.

Its subcellular location is the cytoplasm. It carries out the reaction Endonucleolytic cleavage to 5'-phosphomonoester.. Its function is as follows. Endonuclease that specifically degrades the RNA of RNA-DNA hybrids. The chain is Ribonuclease HII from Campylobacter jejuni subsp. doylei (strain ATCC BAA-1458 / RM4099 / 269.97).